The chain runs to 377 residues: Dehydrogenase/reductase SDR family member 13 (377 aa).

Residues 1-25 form the signal peptide; it reads MEALLLGAGLLLGAYVLVYYNLVKA. Positions 46 and 48 each coordinate NAD(+). Residue Ser170 coordinates substrate. 3 residues coordinate NAD(+): Tyr197, Lys201, and Ser232. Tyr197 (proton acceptor) is an active-site residue. The interval 309 to 377 is disordered; that stretch reads RLAGLGPGED…AKVEPEIQLS (69 aa). The segment covering 317-331 has biased composition (acidic residues); the sequence is EDAEPDEDPQSEDSE. Low complexity predominate over residues 347–357; that stretch reads SQPYPSPQSSP. Residues 368–377 show a composition bias toward basic and acidic residues; sequence AKVEPEIQLS.

The protein belongs to the short-chain dehydrogenases/reductases (SDR) family.

Its subcellular location is the secreted. Functionally, putative oxidoreductase. The polypeptide is Dehydrogenase/reductase SDR family member 13 (Homo sapiens (Human)).